The following is a 556-amino-acid chain: uncharacterized protein (556 aa).

Disordered regions lie at residues Met1–Asn40, Asn80–Trp243, Tyr278–Pro324, Arg363–Asp391, and Asp422–Ala525. The segment covering Asn7–Asn25 has biased composition (low complexity). Residues Glu30–Asn40 show a composition bias toward acidic residues. 2 stretches are compositionally biased toward low complexity: residues Asn80–Ser133 and Asn164–Asn181. Residues Ile182–Phe192 show a composition bias toward acidic residues. Residues Ser207 to Ser226 are compositionally biased toward low complexity. A compositionally biased stretch (polar residues) spans Lys227–Trp243. 3 stretches are compositionally biased toward low complexity: residues Asn292 to Ser322, Lys369 to Lys388, and Gln425 to Ala525. The helical transmembrane segment at Gly528 to Phe548 threads the bilayer.

It is found in the membrane. This is an uncharacterized protein from Dictyostelium discoideum (Social amoeba).